We begin with the raw amino-acid sequence, 476 residues long: Protein transport protein Sec61 subunit alpha isoform 1 (476 aa).

At 2–28 the chain is on the cytoplasmic side; that stretch reads AIKFLEVIKPFCVILPEIQKPERKIQF. A helical transmembrane segment spans residues 29–46; the sequence is KEKVLWTAITLFIFLVCC. At 47-80 the chain is on the lumenal side; it reads QIPLFGIMSSDSADPFYWMRVILASNRGTLMELG. The helical transmembrane segment at 81-97 threads the bilayer; that stretch reads ISPIVTSGLIMQLLAGA. Topologically, residues 98–109 are cytoplasmic; sequence KIIEVGDTPKDR. A helical transmembrane segment spans residues 110-131; sequence ALFNGAQKLFGMIITIGQSIVY. At 132–148 the chain is on the lumenal side; the sequence is VMTGMYGDPSEMGAGIC. A helical transmembrane segment spans residues 149 to 167; the sequence is LLITIQLFVAGLIVLLLDE. Residues 168-177 lie on the Cytoplasmic side of the membrane; the sequence is LLQKGYGLGS. The chain crosses the membrane as a helical span at residues 178–196; sequence GISLFIATNICETIVWKAF. The Lumenal portion of the chain corresponds to 197–241; sequence SPTTVNTGRGMEFEGAIIALFHLLATRTDKVRALREAFYRQNLPN. Residues 242 to 259 traverse the membrane as a helical segment; the sequence is LMNLIATIFVFAVVIYFQ. Topologically, residues 260–285 are cytoplasmic; sequence GFRVDLPIKSARYRGQYNTYPIKLFY. Residues 286 to 306 form a helical membrane-spanning segment; it reads TSNIPIILQSALVSNLYVISQ. The Lumenal portion of the chain corresponds to 307-356; that stretch reads MLSARFSGNLLVSLLGTWSDTSSGGPARAYPVGGLCHYLSPPESFGSVLE. The chain crosses the membrane as a helical span at residues 357-379; sequence DPVHAVVYIVFMLGSCAFFSKTW. Residues 380–420 lie on the Cytoplasmic side of the membrane; the sequence is IEVSGSSAKDVAKQLKEQQMVMRGHRETSMVHELNRYIPTA. The chain crosses the membrane as a helical span at residues 421-437; sequence AAFGGLCIGALSVLADF. Residues 438 to 443 lie on the Lumenal side of the membrane; sequence LGAIGS. The chain crosses the membrane as a helical span at residues 444–458; that stretch reads GTGILLAVTIIYQYF. Residues 459-476 are Cytoplasmic-facing; that stretch reads EIFVKEQSEVGSMGALLF.

This sequence belongs to the SecY/SEC61-alpha family. In terms of assembly, the SEC61 channel-forming translocon complex consists of channel-forming core components SEC61A1, SEC61B and SEC61G and different auxiliary components such as SEC62 and SEC63. The SEC61 channel associates with the multi-pass translocon (MPT) complex.

The protein resides in the endoplasmic reticulum membrane. Functionally, component of SEC61 channel-forming translocon complex that mediates transport of signal peptide-containing precursor polypeptides across the endoplasmic reticulum (ER). Forms a ribosome receptor and a gated pore in the ER membrane, both functions required for cotranslational translocation of nascent polypeptides. May cooperate with auxiliary protein SEC62, SEC63 and HSPA5/BiP to enable post-translational transport of small presecretory proteins. The SEC61 channel is also involved in ER membrane insertion of transmembrane proteins: it mediates membrane insertion of the first few transmembrane segments of proteins, while insertion of subsequent transmembrane regions of multi-pass membrane proteins is mediated by the multi-pass translocon (MPT) complex. The SEC61 channel cooperates with the translocating protein TRAM1 to import nascent proteins into the ER. Controls the passive efflux of calcium ions from the ER lumen to the cytosol through SEC61 channel, contributing to the maintenance of cellular calcium homeostasis. Plays a critical role in nephrogenesis, specifically at pronephros stage. The polypeptide is Protein transport protein Sec61 subunit alpha isoform 1 (SEC61A1) (Canis lupus familiaris (Dog)).